Reading from the N-terminus, the 460-residue chain is MDILFRIRGGLDLAFQLATTDEASAKSVLKYVFSDLANKLSSDVLVLRICNSSVYVWPNNGINTVPELTDDSACKEIKRFVHFDQDDETRRKLGKKKDKKLQDMVINIDLMLEMTSSSDALAPVIERENKEHHYINMTLPVDVVVSVSPDETWGKVQNLLVKAIHKQLTDMERCIMKYMKGTSIVVPEQFHFMLPGKNHLVTISYPTGISDDQLESYRKELHGLFNLPCDRPYFKRANAYHFPDEPYKDGYLKNPHLHLNSPGPESGVVYLVHGTYSYHHYMQDRTDDSGWGCAYRSLQTICSWFKQQGYVDAPIPTHKEIQQALVDAGDKPAAFVGSRQWIGSVEVQLVLNQLFGITSKILFVSQGSELALQGRELANHFKTEGTPVMIGGGVLAHTILGVAWNEMTGQIKYLILDPHYTGGEDLHVILDKGWCAWKGPDFWSKDAYYNLCLPQRPKTI.

Residues cysteine 293, aspartate 417, and histidine 419 contribute to the active site.

Belongs to the peptidase C78 family.

Its subcellular location is the endoplasmic reticulum. The protein resides in the cytoplasm. It localises to the nucleus. In terms of biological role, thiol-dependent isopeptidase that specifically cleaves UFM1, a ubiquitin-like modifier protein, from conjugated proteins. While it is also able to mediate the processing of UFM1 precursors, a prerequisite for conjugation reactions, UFSP2 mainly acts as a protein deUFMylase that mediates deconjugation of UFM1 from target proteins. The sequence is that of Ufm1-specific protease 2 from Gallus gallus (Chicken).